A 714-amino-acid chain; its full sequence is FERM domain-containing protein 7 (714 aa).

The region spanning 2-282 (LHLKVQFLDD…EYHAFFRLSE (281 aa)) is the FERM domain. Positions 537–558 (NIRMKSFQQDLQVLQEAIARTS) form a coiled coil.

In terms of tissue distribution, expressed in liver, kidney, pancreas and at low levels in brain and heart. Expressed in embryonic brain and developing neural retina.

The protein resides in the cell projection. It localises to the neuron projection. The protein localises to the growth cone. Plays a role in neurite development, may be through the activation of the GTPase RAC1. Plays a role in the control of eye movement and gaze stability. This chain is FERM domain-containing protein 7 (FRMD7), found in Homo sapiens (Human).